Reading from the N-terminus, the 393-residue chain is Acyltransferase ato1 (393 aa).

Belongs to the lysine N-acyltransferase mbtK family.

It functions in the pathway siderophore biosynthesis; ferrichrome biosynthesis. L-ornithine N(5)-monooxygenase; part of the siderophore biosynthetic pathway. Omphalotus olearius produces ferrichrome A, but no other siderophore has been detected. Ferrichrome A consists of a hexapeptide ring made up of one glycine, two serine, and three N(5)-hydroxyornithine amino acid residues, the latter acylated by trans-(alpha-methyl)-glutaconic acid residues. The biosynthesis of ferrichrome A depends on the hydroxylation of ornithine to N(5)-hydroxyornithine, catalyzed by the monooxygenase omo1. The second step, the acylation of N(5)-hydroxy-L-ornithine is probably catalyzed by the N-acyltransferase ato1. Finally, assembly of ferrichrome A is catalyzed by the nonribosomal peptide synthase (NRPS) fso1. The sequence is that of Acyltransferase ato1 from Omphalotus olearius (Jack o'lantern).